We begin with the raw amino-acid sequence, 59 residues long: Large ribosomal subunit protein eL29 (59 aa).

Residues 1-26 show a composition bias toward basic residues; it reads MAKSKNHTAHNQTRKAHRNGIKKPKT. The interval 1-37 is disordered; that stretch reads MAKSKNHTAHNQTRKAHRNGIKKPKTYKYPSLKGVDP. A Glycyl lysine isopeptide (Lys-Gly) (interchain with G-Cter in ubiquitin) cross-link involves residue K52.

It belongs to the eukaryotic ribosomal protein eL29 family. As to quaternary structure, component of the large ribosomal subunit (LSU). Mature yeast ribosomes consist of a small (40S) and a large (60S) subunit. The 40S small subunit contains 1 molecule of ribosomal RNA (18S rRNA) and 33 different proteins (encoded by 57 genes). The large 60S subunit contains 3 rRNA molecules (25S, 5.8S and 5S rRNA) and 46 different proteins (encoded by 81 genes).

It localises to the cytoplasm. Functionally, component of the ribosome, a large ribonucleoprotein complex responsible for the synthesis of proteins in the cell. The small ribosomal subunit (SSU) binds messenger RNAs (mRNAs) and translates the encoded message by selecting cognate aminoacyl-transfer RNA (tRNA) molecules. The large subunit (LSU) contains the ribosomal catalytic site termed the peptidyl transferase center (PTC), which catalyzes the formation of peptide bonds, thereby polymerizing the amino acids delivered by tRNAs into a polypeptide chain. The nascent polypeptides leave the ribosome through a tunnel in the LSU and interact with protein factors that function in enzymatic processing, targeting, and the membrane insertion of nascent chains at the exit of the ribosomal tunnel. This is Large ribosomal subunit protein eL29 from Saccharomyces cerevisiae (strain ATCC 204508 / S288c) (Baker's yeast).